The following is a 682-amino-acid chain: MATAALLRSLRRREFATSSISAYRTLASNTKPSWCPSLVGAKWAGLARPFSSKPAGNEIIGIDLGTTNSCVAVMEGKNPKVIENSEGARTTPSVVAFNQKGELLVGTPAKRQAVTNPTNTLSGTKRLIGRRFDDPQTQKEMKMVPYKIVRGSNGDAWVEANGQQYSPTQIGAFILTKMKETAEAYLGKSINKAVITVPAYFNDAQRQAIKDAGAIAGLDVQRIINEPTAAALSYGMNSKEGLVAVFDLGGGTFDVSILEISNGVFEVKATNGDTFLGGEDFDNALLEFLVSEFKRTEGIDLSKDKLALQRLREAAEKAKIELSSTSQTDINLPFITADASGAKHLNITLTRSKFETLVNHLIERTRNPCKNCLKDAGVSLKDVDEVLLVGGMTRVPKVQEIVSEIFGKSPSKGVNPDEAVAMGAALQGGILRGDVKELLLLDVTPLARGIETLGGIFTRLINRNTTIPTKKSQVFSTAADNQTQVGIKVLQGEREMASDNKLLGEFDLVGIPPAPKGYCPQIEVIFDIDANGMVTVSAKDKATSKEQQITIRSSGGLSEDEIDKMVREAEMHAQRIKNARHLLISGIVQSTTIYSIEKSLSEYKEKVPKEVVTEIETAISDLRAAMGTENIDDIKAKLDAANKAVSKIGEHMAGGSSGGASGGGGAQGGDQPPEAEYEEVKK.

A mitochondrion-targeting transit peptide spans 1–57 (MATAALLRSLRRREFATSSISAYRTLASNTKPSWCPSLVGAKWAGLARPFSSKPAGN). The disordered stretch occupies residues 649-682 (GEHMAGGSSGGASGGGGAQGGDQPPEAEYEEVKK). Residues 655–668 (GSSGGASGGGGAQG) are compositionally biased toward gly residues. Over residues 673–682 (PEAEYEEVKK) the composition is skewed to acidic residues.

It belongs to the heat shock protein 70 family.

It is found in the mitochondrion. The polypeptide is Heat shock 70 kDa protein, mitochondrial (HSP68) (Solanum tuberosum (Potato)).